The sequence spans 124 residues: Small ribosomal subunit protein uS12 (124 aa).

3-methylthioaspartic acid is present on D89.

The protein belongs to the universal ribosomal protein uS12 family. As to quaternary structure, part of the 30S ribosomal subunit. Contacts proteins S8 and S17. May interact with IF1 in the 30S initiation complex.

Functionally, with S4 and S5 plays an important role in translational accuracy. Its function is as follows. Interacts with and stabilizes bases of the 16S rRNA that are involved in tRNA selection in the A site and with the mRNA backbone. Located at the interface of the 30S and 50S subunits, it traverses the body of the 30S subunit contacting proteins on the other side and probably holding the rRNA structure together. The combined cluster of proteins S8, S12 and S17 appears to hold together the shoulder and platform of the 30S subunit. The protein is Small ribosomal subunit protein uS12 of Shewanella halifaxensis (strain HAW-EB4).